We begin with the raw amino-acid sequence, 85 residues long: Large ribosomal subunit protein bL27 (85 aa).

Residues 1–20 (MATKKAGGSTRNGRDSEAKR) are disordered.

This sequence belongs to the bacterial ribosomal protein bL27 family.

The sequence is that of Large ribosomal subunit protein bL27 from Histophilus somni (strain 129Pt) (Haemophilus somnus).